A 351-amino-acid chain; its full sequence is C(7)-cyclitol 7-kinase (351 aa).

It belongs to the ROK (NagC/XylR) family.

It catalyses the reaction valienone + ATP = valienone 7-phosphate + ADP + H(+). The catalysed reaction is validone + ATP = validone 7-phosphate + ADP + H(+). Its function is as follows. Involved in the biosynthesis of the antifungal agent validamycin A. Catalyzes the phosphorylation of valienone and validone to their 7-phosphate derivatives. The chain is C(7)-cyclitol 7-kinase from Streptomyces hygroscopicus subsp. jinggangensis (strain 5008).